Reading from the N-terminus, the 536-residue chain is Arginine--tRNA ligase (536 aa).

The short motif at 119-129 (ANPTGFLHIGH) is the 'HIGH' region element.

The protein belongs to the class-I aminoacyl-tRNA synthetase family. As to quaternary structure, monomer.

Its subcellular location is the cytoplasm. It catalyses the reaction tRNA(Arg) + L-arginine + ATP = L-arginyl-tRNA(Arg) + AMP + diphosphate. In Mycoplasma mobile (strain ATCC 43663 / 163K / NCTC 11711) (Mesomycoplasma mobile), this protein is Arginine--tRNA ligase.